A 318-amino-acid chain; its full sequence is Protein LplB (318 aa).

The next 6 membrane-spanning stretches (helical) occupy residues 35–55 (LIPG…GVLI), 94–114 (LMLA…LALL), 130–150 (FIYV…FVFF), 182–202 (IVMQ…LAAL), 236–256 (IIVL…EQVY), and 289–309 (AVGL…NYIA). An ABC transmembrane type-1 domain is found at 90-305 (LRNTLMLASL…VVGIILIFGA (216 aa)).

This sequence belongs to the binding-protein-dependent transport system permease family. MalFG subfamily.

Its subcellular location is the cell membrane. The protein is Protein LplB (lplB) of Bacillus subtilis (strain 168).